Consider the following 297-residue polypeptide: Nucleotide-binding protein Bxeno_A0336 (297 aa).

Residue glycine 8–serine 15 participates in ATP binding. Residue aspartate 57–serine 60 participates in GTP binding.

This sequence belongs to the RapZ-like family.

Functionally, displays ATPase and GTPase activities. The protein is Nucleotide-binding protein Bxeno_A0336 of Paraburkholderia xenovorans (strain LB400).